A 405-amino-acid polypeptide reads, in one-letter code: GTPase Obg (405 aa).

One can recognise an Obg domain in the interval 1–159 (MKFVDEVSIF…RDLKLELKVL (159 aa)). Residues 127 to 148 (NTRFKSSTNRAPRQTTPGKPGE) are disordered. The span at 129–143 (RFKSSTNRAPRQTTP) shows a compositional bias: polar residues. One can recognise an OBG-type G domain in the interval 160–333 (ADVGLLGLPN…LCQDIMHYLD (174 aa)). GTP-binding positions include 166–173 (GLPNAGKS), 191–195 (FTTLV), 213–216 (DIPG), 283–286 (NKAD), and 314–316 (SAL). Mg(2+) contacts are provided by Ser-173 and Thr-193. The segment covering 383–398 (ALEDEDDFDDEDDGDG) has biased composition (acidic residues). Residues 383–405 (ALEDEDDFDDEDDGDGPEIFYVR) form a disordered region.

The protein belongs to the TRAFAC class OBG-HflX-like GTPase superfamily. OBG GTPase family. As to quaternary structure, monomer. Requires Mg(2+) as cofactor.

The protein localises to the cytoplasm. Its function is as follows. An essential GTPase which binds GTP, GDP and possibly (p)ppGpp with moderate affinity, with high nucleotide exchange rates and a fairly low GTP hydrolysis rate. Plays a role in control of the cell cycle, stress response, ribosome biogenesis and in those bacteria that undergo differentiation, in morphogenesis control. The sequence is that of GTPase Obg from Azotobacter vinelandii (strain DJ / ATCC BAA-1303).